Here is a 424-residue protein sequence, read N- to C-terminus: Choline-phosphate cytidylyltransferase (424 aa).

Positions 1–70 (MANPTTGKSS…RKRRRLTKEF (70 aa)) are disordered. The span at 14-24 (KLSNSSLSNLF) shows a compositional bias: low complexity. At Ser16 the chain carries Phosphoserine. A compositionally biased stretch (acidic residues) spans 35–44 (ETEEQDNEDK). Over residues 45–55 (DESKNQDENKD) the composition is skewed to basic and acidic residues. A Phosphothreonine modification is found at Thr59. CTP-binding positions include 111–119 (VFDLFHLGH) and Lys149. Residues Lys149 and Trp178 each contribute to the substrate site. Residues 195–196 (HD), Tyr200, and 223–227 (RTNGV) contribute to the CTP site. Ser346 is subject to Phosphoserine. Residues 348–424 (ATEFANEFTG…LTQKKKQSAN (77 aa)) are disordered. The segment covering 381–398 (NSNNTNTNSDSDSNTNST) has biased composition (low complexity). Ser401 is subject to Phosphoserine; by CK2.

The protein belongs to the cytidylyltransferase family.

The protein localises to the membrane. The catalysed reaction is phosphocholine + CTP + H(+) = CDP-choline + diphosphate. It functions in the pathway phospholipid metabolism; phosphatidylcholine biosynthesis; phosphatidylcholine from phosphocholine: step 1/2. Functionally, catalyzes the key rate-limiting step in the CDP-choline pathway for phosphatidylcholine biosynthesis. The polypeptide is Choline-phosphate cytidylyltransferase (PCT1) (Saccharomyces cerevisiae (strain ATCC 204508 / S288c) (Baker's yeast)).